Consider the following 241-residue polypeptide: 1-(5-phosphoribosyl)-5-[(5-phosphoribosylamino)methylideneamino] imidazole-4-carboxamide isomerase (241 aa).

Asp-8 acts as the Proton acceptor in catalysis. Residue Asp-129 is the Proton donor of the active site.

Belongs to the HisA/HisF family.

It is found in the cytoplasm. It carries out the reaction 1-(5-phospho-beta-D-ribosyl)-5-[(5-phospho-beta-D-ribosylamino)methylideneamino]imidazole-4-carboxamide = 5-[(5-phospho-1-deoxy-D-ribulos-1-ylimino)methylamino]-1-(5-phospho-beta-D-ribosyl)imidazole-4-carboxamide. It functions in the pathway amino-acid biosynthesis; L-histidine biosynthesis; L-histidine from 5-phospho-alpha-D-ribose 1-diphosphate: step 4/9. The protein is 1-(5-phosphoribosyl)-5-[(5-phosphoribosylamino)methylideneamino] imidazole-4-carboxamide isomerase of Chloroflexus aurantiacus (strain ATCC 29364 / DSM 637 / Y-400-fl).